A 350-amino-acid chain; its full sequence is N-acetyllactosaminide beta-1,3-N-acetylglucosaminyltransferase 4 (350 aa).

Over 1-4 (MLPR) the chain is Cytoplasmic. A helical; Signal-anchor for type II membrane protein membrane pass occupies residues 5–25 (LGCVLFCSLVVLLLSCLLLLK). Over 26-350 (ERIPAGSSKA…RLKCAATHKP (325 aa)) the chain is Lumenal. Residues asparagine 53 and asparagine 166 are each glycosylated (N-linked (GlcNAc...) asparagine).

This sequence belongs to the glycosyltransferase 31 family.

The protein resides in the golgi apparatus membrane. The enzyme catalyses a beta-D-galactosyl-(1-&gt;4)-N-acetyl-beta-D-glucosaminyl derivative + UDP-N-acetyl-alpha-D-glucosamine = an N-acetyl-beta-D-glucosaminyl-(1-&gt;3)-beta-D-galactosyl-(1-&gt;4)-N-acetyl-beta-D-glucosaminyl derivative + UDP + H(+). It participates in protein modification; protein glycosylation. Functionally, beta-1,3-N-acetylglucosaminyltransferase involved in the synthesis of poly-N-acetyllactosamine. Has activity for type 2 oligosaccharides. This Mus musculus (Mouse) protein is N-acetyllactosaminide beta-1,3-N-acetylglucosaminyltransferase 4 (B3gnt4).